Here is a 150-residue protein sequence, read N- to C-terminus: MGVEGTMEYISDLLKKRKRKKKKQMQTVALRVARIDCEGCERKIKHVLSGVKGVKSVDVDVKLQKVTVTGYIDPKKVLEAAKSTKKKVELWPYVPYTMVANPYISQAYDKKAPPNMVRKVPDTASVNETTVDDSYTIMFSDENPNSCAIM.

The region spanning 26-89 (QTVALRVARI…AAKSTKKKVE (64 aa)) is the HMA domain. A metal cation is bound by residues C37 and C40. C147 is subject to Cysteine methyl ester. C147 is lipidated: S-farnesyl cysteine. Residues 148–150 (AIM) constitute a propeptide, removed in mature form.

This sequence belongs to the HIPP family. As to quaternary structure, interacts with ZHD11/HB29.

Its function is as follows. Heavy-metal-binding protein. The protein is Heavy metal-associated isoprenylated plant protein 24 of Arabidopsis thaliana (Mouse-ear cress).